A 114-amino-acid polypeptide reads, in one-letter code: MGCRLLCCAVLCLLGAVPMETGVTQTPRHLVMGMTNKKSLKCEQHLGHNAMYWYKQSAKKPLELMFVYSLEERVENNSVPSRFSPECPNSSHLFLHLHTLQPEDSALYLCASSQ.

Residues 1–21 (MGCRLLCCAVLCLLGAVPMET) form the signal peptide. Residues 22–114 (GVTQTPRHLV…SALYLCASSQ (93 aa)) enclose the Ig-like domain. A disulfide bridge connects residues cysteine 42 and cysteine 110. N-linked (GlcNAc...) asparagine glycans are attached at residues asparagine 76 and asparagine 89.

As to quaternary structure, alpha-beta TR is a heterodimer composed of an alpha and beta chain; disulfide-linked. The alpha-beta TR is associated with the transmembrane signaling CD3 coreceptor proteins to form the TR-CD3 (TcR or TCR). The assembly of alpha-beta TR heterodimers with CD3 occurs in the endoplasmic reticulum where a single alpha-beta TR heterodimer associates with one CD3D-CD3E heterodimer, one CD3G-CD3E heterodimer and one CD247 homodimer forming a stable octameric structure. CD3D-CD3E and CD3G-CD3E heterodimers preferentially associate with TR alpha and TR beta chains, respectively. The association of the CD247 homodimer is the last step of TcR assembly in the endoplasmic reticulum and is required for transport to the cell surface.

The protein localises to the cell membrane. Its function is as follows. V region of the variable domain of T cell receptor (TR) beta chain that participates in the antigen recognition. Alpha-beta T cell receptors are antigen specific receptors which are essential to the immune response and are present on the cell surface of T lymphocytes. Recognize peptide-major histocompatibility (MH) (pMH) complexes that are displayed by antigen presenting cells (APC), a prerequisite for efficient T cell adaptive immunity against pathogens. Binding of alpha-beta TR to pMH complex initiates TR-CD3 clustering on the cell surface and intracellular activation of LCK that phosphorylates the ITAM motifs of CD3G, CD3D, CD3E and CD247 enabling the recruitment of ZAP70. In turn ZAP70 phosphorylates LAT, which recruits numerous signaling molecules to form the LAT signalosome. The LAT signalosome propagates signal branching to three major signaling pathways, the calcium, the mitogen-activated protein kinase (MAPK) kinase and the nuclear factor NF-kappa-B (NF-kB) pathways, leading to the mobilization of transcription factors that are critical for gene expression and essential for T cell growth and differentiation. The T cell repertoire is generated in the thymus, by V-(D)-J rearrangement. This repertoire is then shaped by intrathymic selection events to generate a peripheral T cell pool of self-MH restricted, non-autoaggressive T cells. Post-thymic interaction of alpha-beta TR with the pMH complexes shapes TR structural and functional avidity. The chain is T cell receptor beta variable 4-3 from Homo sapiens (Human).